A 404-amino-acid polypeptide reads, in one-letter code: METRPSSSSSLSPATNLNLDRLKVLKLLGKGATGTVFLVHDSVSDSSVSSPFALKLVDKSSASSLRRARWEIQILRRLSDDTNPNPFLPKLLASSESSEFIAWALPYCSGGDLNVLRQRQNDGVFSSSVIKFYLAEIVCALDHLHTMGIAYRDLKPENILLQESGHVTLTDFDLSCSLNKPTRPEFYHLSDPEPDPNPESNLSHNKKSLRIFRQKKKKTKSARVNPITRRRLSFSGGERSNSFVGTDEYISPEVIRGDGHDFAVDWWALGVLTYEMMYGETPFKGRNKKETFRNVLVKEPEFAGKPSDLTDLIRRLLVKDPTKRFGFWRGAAEIKEHAFFKGVRWELLTEVLRPPFIPLRDDGDLTGKVTEESGFGIKEYFEKLKTPPLPLPHECSENNPFVDF.

Residues 22 to 340 (LKVLKLLGKG…AAEIKEHAFF (319 aa)) enclose the Protein kinase domain. ATP contacts are provided by residues 28–36 (LGKGATGTV) and lysine 55. Catalysis depends on aspartate 153, which acts as the Proton acceptor. Residues 185–207 (EFYHLSDPEPDPNPESNLSHNKK) are disordered. Positions 341-404 (KGVRWELLTE…CSENNPFVDF (64 aa)) constitute an AGC-kinase C-terminal domain.

The protein belongs to the protein kinase superfamily. AGC Ser/Thr protein kinase family. As to expression, expressed in the epidermis and cortex of the transition zone of the root apex and developing flowers. Expressed in rosette leaves, stems and siliques.

The protein localises to the cytoplasm. Its subcellular location is the nucleus. The catalysed reaction is L-seryl-[protein] + ATP = O-phospho-L-seryl-[protein] + ADP + H(+). It catalyses the reaction L-threonyl-[protein] + ATP = O-phospho-L-threonyl-[protein] + ADP + H(+). Its function is as follows. Regulates planar ovule integument development by suppressing aberrantly oriented growth. Maintains planar growth of integuments by repressing the developmental regulator and transcription factor KAN4 which is involved in the control of early integument growth and polarity. Restricts growth in stamen filaments, petals, and cotyledons. This chain is Serine/threonine-protein kinase UCN, found in Arabidopsis thaliana (Mouse-ear cress).